A 585-amino-acid polypeptide reads, in one-letter code: Putative phospholipase B-like 2 (585 aa).

An N-terminal signal peptide occupies residues M1–A35. N-linked (GlcNAc...) asparagine glycans are attached at residues N84, N102, and N106. The cysteines at positions 138 and 148 are disulfide-linked. N-linked (GlcNAc...) asparagine glycans are attached at residues N227 and N432. C488 and C491 are oxidised to a cystine. N511 carries an N-linked (GlcNAc...) asparagine glycan.

Belongs to the phospholipase B-like family. Interacts with IGF2R. In terms of processing, glycosylated; contains mannose 6-phosphate sugars.

The protein localises to the lysosome lumen. Functionally, putative phospholipase. This Rattus norvegicus (Rat) protein is Putative phospholipase B-like 2 (Plbd2).